We begin with the raw amino-acid sequence, 65 residues long: Small ribosomal subunit protein bS21 (65 aa).

This sequence belongs to the bacterial ribosomal protein bS21 family.

The sequence is that of Small ribosomal subunit protein bS21 from Chlorobium chlorochromatii (strain CaD3).